The following is a 113-amino-acid chain: P antigen family member 3 (113 aa).

Basic residues predominate over residues 1–12 (MSGHQRTRSRSR). Disordered stretches follow at residues 1–61 (MSGH…EGAL) and 78–113 (SKTG…QPSV).

Belongs to the GAGE family.

This chain is P antigen family member 3 (PAGE3), found in Homo sapiens (Human).